The following is a 124-amino-acid chain: Small ribosomal subunit protein uS12 (124 aa).

A 3-methylthioaspartic acid modification is found at Asp89. The segment at 105-124 is disordered; that stretch reads QGVKNRKQARSKYGAKMEKK.

It belongs to the universal ribosomal protein uS12 family. As to quaternary structure, part of the 30S ribosomal subunit. Contacts proteins S8 and S17. May interact with IF1 in the 30S initiation complex.

In terms of biological role, with S4 and S5 plays an important role in translational accuracy. Its function is as follows. Interacts with and stabilizes bases of the 16S rRNA that are involved in tRNA selection in the A site and with the mRNA backbone. Located at the interface of the 30S and 50S subunits, it traverses the body of the 30S subunit contacting proteins on the other side and probably holding the rRNA structure together. The combined cluster of proteins S8, S12 and S17 appears to hold together the shoulder and platform of the 30S subunit. This Renibacterium salmoninarum (strain ATCC 33209 / DSM 20767 / JCM 11484 / NBRC 15589 / NCIMB 2235) protein is Small ribosomal subunit protein uS12.